The chain runs to 111 residues: MMGMNPRQMKKLMKQLGIKMEELEGVEEVVLRMKGKEIILKEPAVTVMVVQGEKTYQIIPGSEEVREVLEISEDDIKLVMEQAGVDYDTAKKALEEAKGDLAEAILKLTEG.

In terms of domain architecture, NAC-A/B spans 3 to 72; that stretch reads GMNPRQMKKL…EEVREVLEIS (70 aa).

Belongs to the NAC-alpha family. Homodimer. Interacts with the ribosome. Binds ribosomal RNA.

In terms of biological role, contacts the emerging nascent chain on the ribosome. The polypeptide is Nascent polypeptide-associated complex protein (Thermococcus kodakarensis (strain ATCC BAA-918 / JCM 12380 / KOD1) (Pyrococcus kodakaraensis (strain KOD1))).